The chain runs to 404 residues: WD repeat and SOCS box-containing protein 2 (404 aa).

WD repeat units lie at residues 16–55, 81–140, 144–183, 188–226, 230–268, 283–322, and 325–362; these read GRPHQFDWKSSCETWSVAFSPDGSWFAWSQGHCIVKLIPW, GSPK…IWEV, LLLLNLSGHQDVVRDLSFTPSGSLILVSASRDKTLRIWDL, KQIQVLSGHLQWVYCCSISPDCSMLCSAAGEKSVFLWSM, TLIRKLEGHQSSVVSCDFSPDSALLVTASYDTNVIMWDP, DPAMDDSDVHISSLRSVCFSPEGLYLATVADDRLLRIWAL, and KTPIAFAPMTNGLCCTFFPHGGVIATGTRDGHVQFWTA. A disordered region spans residues 68 to 87; that stretch reads AKSRSSKNETKGRGSPKEKT. The region spanning 356–404 is the SOCS box domain; sequence HVQFWTAPRVLSSLKHLCRKALRSFLTTYQVLALPIPKKMKEFLTYRTF.

The protein operates within protein modification; protein ubiquitination. Functionally, may be a substrate-recognition component of a SCF-like ECS (Elongin-Cullin-SOCS-box protein) E3 ubiquitin ligase complex which mediates the ubiquitination and subsequent proteasomal degradation of target proteins. The chain is WD repeat and SOCS box-containing protein 2 (WSB2) from Homo sapiens (Human).